The chain runs to 1892 residues: Alpha-2-macroglobulin (1892 aa).

The signal sequence occupies residues 1-23 (MKNIFRKFVFTIFVCLINLQLIA). Positions 1441-1444 (CTEQ) form a cross-link, isoglutamyl cysteine thioester (Cys-Gln).

It belongs to the protease inhibitor I39 (alpha-2-macroglobulin) family. Bacterial alpha-2-macroglobulin subfamily.

In terms of biological role, protects the bacterial cell from host peptidases. The chain is Alpha-2-macroglobulin from Rickettsia conorii (strain ATCC VR-613 / Malish 7).